Reading from the N-terminus, the 398-residue chain is Type II secretion system protein L (398 aa).

The Cytoplasmic portion of the chain corresponds to Met1–Pro248. A helical transmembrane segment spans residues Val249 to Leu265. At His266 to Ala398 the chain is on the periplasmic side.

This sequence belongs to the GSP L family. Type II secretion system is composed of four main components: the outer membrane complex, the inner membrane complex, the cytoplasmic secretion ATPase and the periplasm-spanning pseudopilus. Forms homodimers. Interacts with PulM/GspM. Interacts with PulE/GspE and PulF/GspF.

It localises to the cell inner membrane. Its function is as follows. Inner membrane component of the type II secretion system required for the energy-dependent secretion of extracellular factors such as proteases and toxins from the periplasm. Plays a role in the complex assembly and recruits PulM resulting in a stable complex in the inner membrane. Provides thus a link between the energy-providing PulE protein in the cytoplasm and the rest of the T2SS machinery. The sequence is that of Type II secretion system protein L (pulL) from Klebsiella pneumoniae.